The chain runs to 362 residues: MKNLNKNTKIIVGLSGGVDSSVTALLLLKQGYQVEALFMKNWEEDDKGRYCSAKQDLSDAQNITNKLSIKLHTINFSVDYWNDVFTHFLKEYKKGRTPNPDILCNQKIKFGAFLKHAISLGADKIATGHYARIAKKNGTYQLKTGLDNNKDQSYFLHLLSQYQLSKSLFPLGETNKIDVRNIATENGFVTAKKKDSTGICFIGERKFSEFLATYLPKQQGNIVGEQGQFIKHHQGLAFYTIGQRKGLEIGGGFGKSGKPWFVADKCIERNELVVVQGDHTLLYYQTLNTSKPYWINTPPTLPMTCNAKIRYRQQSQSCMISQDNNKQLKIIFKQPQRAITPGQSIVFYDNETCLGGAIIEYR.

ATP is bound by residues 13–20 and Met-39; that span reads GLSGGVDS. Positions 99–101 are interaction with target base in tRNA; sequence NPD. The Nucleophile role is filled by Cys-104. Cys-104 and Cys-200 are joined by a disulfide. An ATP-binding site is contributed by Gly-128. The interaction with tRNA stretch occupies residues 150 to 152; it reads KDQ. Cys-200 functions as the Cysteine persulfide intermediate in the catalytic mechanism. The interval 310–311 is interaction with tRNA; it reads RY.

The protein belongs to the MnmA/TRMU family.

Its subcellular location is the cytoplasm. It catalyses the reaction S-sulfanyl-L-cysteinyl-[protein] + uridine(34) in tRNA + AH2 + ATP = 2-thiouridine(34) in tRNA + L-cysteinyl-[protein] + A + AMP + diphosphate + H(+). Catalyzes the 2-thiolation of uridine at the wobble position (U34) of tRNA, leading to the formation of s(2)U34. The polypeptide is tRNA-specific 2-thiouridylase MnmA (Vesicomyosocius okutanii subsp. Calyptogena okutanii (strain HA)).